The primary structure comprises 245 residues: Caffeoyl-CoA O-methyltransferase (245 aa).

Residue lysine 19 coordinates substrate. Residues threonine 61, glutamate 83, 85–86 (GV), serine 91, aspartate 109, and alanine 138 contribute to the S-adenosyl-L-methionine site. Aspartate 161 contacts substrate. An a divalent metal cation-binding site is contributed by aspartate 161. An S-adenosyl-L-methionine-binding site is contributed by aspartate 163. Positions 187 and 188 each coordinate a divalent metal cation. A substrate-binding site is contributed by asparagine 192.

It belongs to the class I-like SAM-binding methyltransferase superfamily. Cation-dependent O-methyltransferase family. CCoAMT subfamily. A divalent metal cation is required as a cofactor.

The catalysed reaction is (E)-caffeoyl-CoA + S-adenosyl-L-methionine = (E)-feruloyl-CoA + S-adenosyl-L-homocysteine + H(+). The protein operates within aromatic compound metabolism; phenylpropanoid biosynthesis. Methylates caffeoyl-CoA to feruloyl-CoA and 5-hydroxyferuloyl-CoA to sinapoyl-CoA. Plays a role in the synthesis of feruloylated polysaccharides. Involved in the reinforcement of the plant cell wall. Also involved in the responding to wounding or pathogen challenge by the increased formation of cell wall-bound ferulic acid polymers. The polypeptide is Caffeoyl-CoA O-methyltransferase (CCOAOMT) (Zinnia elegans (Garden zinnia)).